The following is a 466-amino-acid chain: Magnetosome-associated protein MamJ (466 aa).

Disordered regions lie at residues 1–23 and 60–80; these read MAKN…ISTG and ANQG…RSQD. The interval 1 to 24 is not required to restore magnetic response to deletion mutant; that stretch reads MAKNRRDRGTDLPGDGDQKISTGP. Residues 25-80 are required to restore magnetic response to deletion mutant; sequence EIVSVTVHPSPNLAAAAKPVQGDIWASLLESSPWSANQGGLVETAQPPSAPIRSQD. Tandem repeat unit repeat units follow at residues 81–168 and 169–256; these read PVPV…VEPE and PAPV…VEPE. Not required to restore magnetic response to deletion mutant stretches follow at residues 81–256, 136–334, 333–374, and 432–466; these read PVPV…VEPE, ETDA…SQAE, AESV…AVEA, and VGSN…DKNK. Glu-Pro-rich motif repeat units follow at residues 145-164, 233-252, and 253-272; these read IEPE…EAAE and VEPE…EAAE. Required to restore magnetic response to deletion mutant regions lie at residues 375–432 and 426–466; these read TRQP…GRLV and VKGG…DKNK.

Belongs to the magnetosome MamJ protein family. As to quaternary structure, forms homooligomers. Interacts with MamK. In terms of processing, identified by N-terminal sequencing of a protein that is about 96 kDa in size. The protein runs anomalously on protein gels.

The protein localises to the magnetosome. Functionally, required for assembly of magnetosome chains. Regulates the dynamic behavior of MamK filaments. May connect magnetosomes to MamK filaments. Moves from the cell poles towards midcell; movement does not depend on the treadmilling ability of MamK, suggesting MamJ associates and disassociates continuously from the MamK filament. In Magnetospirillum gryphiswaldense (strain DSM 6361 / JCM 21280 / NBRC 15271 / MSR-1), this protein is Magnetosome-associated protein MamJ.